A 295-amino-acid polypeptide reads, in one-letter code: Protease HtpX (295 aa).

2 helical membrane passes run 4–24 (ILLF…TLSL) and 42–62 (QLLI…LFIS). Position 147 (H147) interacts with Zn(2+). Residue E148 is part of the active site. H151 contacts Zn(2+). Helical transmembrane passes span 158 to 178 (VTLA…ARII) and 199 to 219 (VATI…VMWF). Residue E224 coordinates Zn(2+).

It belongs to the peptidase M48B family. It depends on Zn(2+) as a cofactor.

The protein resides in the cell inner membrane. This Pseudomonas fluorescens (strain ATCC BAA-477 / NRRL B-23932 / Pf-5) protein is Protease HtpX.